Reading from the N-terminus, the 98-residue chain is MTALTKADMADHLSELTSLNRREAKQMVELFFDEISQALIAGEQVKLSGFGNFELRDKRERPGRNPKTGEEIPISARRVVTFRAGQKFRQRVGNEQID.

This sequence belongs to the bacterial histone-like protein family. As to quaternary structure, heterodimer of an alpha and a beta chain.

In terms of biological role, this protein is one of the two subunits of integration host factor, a specific DNA-binding protein that functions in genetic recombination as well as in transcriptional and translational control. The sequence is that of Integration host factor subunit alpha from Acinetobacter baumannii (strain AB307-0294).